A 123-amino-acid chain; its full sequence is MAKLTKQAFVEALKEMSLLEIKELVDGLKEEFGIDPSAVAVAAGPAAAAEVEEKTEFNVVLKSFGDKKIEVIKVTREVTGLGLVEAKKLVETADAVIKENAKKDEAEALKAKFEAAGAVVEIV.

Belongs to the bacterial ribosomal protein bL12 family. In terms of assembly, homodimer. Part of the ribosomal stalk of the 50S ribosomal subunit. Forms a multimeric L10(L12)X complex, where L10 forms an elongated spine to which 2 to 4 L12 dimers bind in a sequential fashion. Binds GTP-bound translation factors.

Its function is as follows. Forms part of the ribosomal stalk which helps the ribosome interact with GTP-bound translation factors. Is thus essential for accurate translation. This chain is Large ribosomal subunit protein bL12, found in Acholeplasma laidlawii (strain PG-8A).